A 317-amino-acid polypeptide reads, in one-letter code: Apolipoprotein E (317 aa).

A signal peptide spans 1 to 18 (MKVLWAALLVTFLAGCQA). 8 repeat units span residues 80–101 (TLMD…EQLS), 102–123 (PVAE…ARLG), 124–145 (ADME…AMLG), 146–167 (QSTE…KRLL), 168–189 (RDAD…EGAE), 190–211 (RGVS…VRAA), 212–233 (TVGS…ERLR), and 234–255 (ARME…EQVA). The interval 80-255 (TLMDETMKEL…RLDEVKEQVA (176 aa)) is 8 X 22 AA approximate tandem repeats. Met-143 is subject to Methionine sulfoxide. The residue at position 147 (Ser-147) is a Phosphoserine. An LDL and other lipoprotein receptors binding region spans residues 158–168 (HLRKLRKRLLR). 162 to 165 (LRKR) provides a ligand contact to heparin. Residues 210–290 (AATVGSLASQ…SWFEPLVEDM (81 aa)) form a lipid-binding and lipoprotein association region. Residue 229–236 (GERLRARM) coordinates heparin. The homooligomerization stretch occupies residues 266–317 (QQISLQAEAFQARLKSWFEPLVEDMQRQWAGLVEKVQAAVGASTAPVPIDNH). Positions 278 to 290 (RLKSWFEPLVEDM) are specificity for association with VLDL.

Belongs to the apolipoprotein A1/A4/E family. In terms of assembly, homotetramer. May interact with ABCA1; functionally associated with ABCA1 in the biogenesis of HDLs. May interact with APP/A4 amyloid-beta peptide; the interaction is extremely stable in vitro but its physiological significance is unclear. May interact with MAPT. May interact with MAP2. In the cerebrospinal fluid, interacts with secreted SORL1. Interacts with PMEL; this allows the loading of PMEL luminal fragment on ILVs to induce fibril nucleation. In terms of processing, APOE exists as multiple glycosylated and sialylated glycoforms within cells and in plasma. The extent of glycosylation and sialylation are tissue and context specific. Glycated in plasma VLDL. Post-translationally, phosphorylated by FAM20C in the extracellular medium.

The protein resides in the secreted. Its subcellular location is the extracellular space. It localises to the extracellular matrix. The protein localises to the extracellular vesicle. It is found in the endosome. The protein resides in the multivesicular body. Its function is as follows. APOE is an apolipoprotein, a protein associating with lipid particles, that mainly functions in lipoprotein-mediated lipid transport between organs via the plasma and interstitial fluids. APOE is a core component of plasma lipoproteins and is involved in their production, conversion and clearance. Apolipoproteins are amphipathic molecules that interact both with lipids of the lipoprotein particle core and the aqueous environment of the plasma. As such, APOE associates with chylomicrons, chylomicron remnants, very low density lipoproteins (VLDL) and intermediate density lipoproteins (IDL) but shows a preferential binding to high-density lipoproteins (HDL). It also binds a wide range of cellular receptors including the LDL receptor/LDLR, the LDL receptor-related proteins LRP1, LRP2 and LRP8 and the very low-density lipoprotein receptor/VLDLR that mediate the cellular uptake of the APOE-containing lipoprotein particles. Finally, APOE also has a heparin-binding activity and binds heparan-sulfate proteoglycans on the surface of cells, a property that supports the capture and the receptor-mediated uptake of APOE-containing lipoproteins by cells. A main function of APOE is to mediate lipoprotein clearance through the uptake of chylomicrons, VLDLs, and HDLs by hepatocytes. APOE is also involved in the biosynthesis by the liver of VLDLs as well as their uptake by peripheral tissues ensuring the delivery of triglycerides and energy storage in muscle, heart and adipose tissues. By participating in the lipoprotein-mediated distribution of lipids among tissues, APOE plays a critical role in plasma and tissues lipid homeostasis. APOE is also involved in two steps of reverse cholesterol transport, the HDLs-mediated transport of cholesterol from peripheral tissues to the liver, and thereby plays an important role in cholesterol homeostasis. First, it is functionally associated with ABCA1 in the biogenesis of HDLs in tissues. Second, it is enriched in circulating HDLs and mediates their uptake by hepatocytes. APOE also plays an important role in lipid transport in the central nervous system, regulating neuron survival and sprouting. The chain is Apolipoprotein E (APOE) from Macaca fascicularis (Crab-eating macaque).